Reading from the N-terminus, the 611-residue chain is RAC serine/threonine-protein kinase (611 aa).

Low complexity predominate over residues 14–25; sequence VVASAPAPGSAS. Disordered regions lie at residues 14 to 33 and 45 to 88; these read VVASAPAPGSASRIPESPTT and QSTH…NTTF. Residue Ser-30 is modified to Phosphoserine. One can recognise a PH domain in the interval 106-211; that stretch reads QVVKEGWLMK…WTEAIRNVSS (106 aa). The region spanning 266–523 is the Protein kinase domain; the sequence is FEFLKVLGKG…VKEIQAHPFF (258 aa). ATP contacts are provided by residues 272–280 and Lys-295; that span reads LGKGTFGKV. Asp-389 (proton acceptor) is an active-site residue. Residues 524 to 597 form the AGC-kinase C-terminal domain; that stretch reads ASINWTDLVL…QGDMASTLGT (74 aa). Ser-586 is subject to Phosphoserine.

It belongs to the protein kinase superfamily. AGC Ser/Thr protein kinase family. RAC subfamily. In terms of assembly, interacts with trbl. Phosphorylated and activated by Pk61C/PDK1. Phosphorylated on Ser-586 by the TORC2 complex. As to expression, ubiquitously expressed. Present in ovary, where it is concentrated at the basal side of follicle cells.

The protein localises to the cytoplasm. Its subcellular location is the cytosol. It localises to the cell membrane. It catalyses the reaction L-seryl-[protein] + ATP = O-phospho-L-seryl-[protein] + ADP + H(+). It carries out the reaction L-threonyl-[protein] + ATP = O-phospho-L-threonyl-[protein] + ADP + H(+). Functionally, serine/threonine kinase involved in various developmental processes. During early embryogenesis, acts as a survival protein. During mid-embryogenesis, phosphorylates and activates trh, a transcription factor required for tracheal cell fate determination. Also regulates tracheal cell migration. Later in development, acts downstream of PI3K and Pk61C/PDK1 in the insulin receptor transduction pathway which regulates cell growth and organ size, by phosphorylating and antagonizing FOXO transcription factor. Controls follicle cell size during oogenesis. May also stimulate cell growth by phosphorylating Gig/Tsc2 and inactivating the Tsc complex. Dephosphorylation of 'Ser-586' by Phlpp triggers apoptosis and suppression of tumor growth. The sequence is that of RAC serine/threonine-protein kinase from Drosophila melanogaster (Fruit fly).